A 75-amino-acid polypeptide reads, in one-letter code: Kappa-thalatoxin-Cad2a (75 aa).

Residues M1–A22 form the signal peptide. A propeptide spanning residues R23–R40 is cleaved from the precursor. In terms of domain architecture, ShKT spans C43–C75. Disulfide bonds link C43–C75, C52–C68, and C57–C72.

The protein belongs to the sea anemone type 1 potassium channel toxin family. Type 1a subfamily.

It is found in the secreted. Its subcellular location is the nematocyst. In terms of biological role, inhibits voltage-gated potassium channels (Kv) with higher potency for Kv1.1/KCNA1 and Kv1.3/KCNA3. The chain is Kappa-thalatoxin-Cad2a from Cryptodendrum adhaesivum (Adhesive sea anemone).